Reading from the N-terminus, the 908-residue chain is Mycobactin import ATP-binding/permease protein IrtA (908 aa).

The Cytoplasmic segment spans residues 1 to 329; it reads MARGFQGVML…SRLLAPLKKP (329 aa). An FAD-binding FR-type domain is found at 15–124; sequence ARDHQATVVD…MGSRGFSVPE (110 aa). A siderophore interaction domain region spans residues 16–245; it reads RDHQATVVDK…AQAYWTEGRA (230 aa). FAD is bound by residues 70 to 73, 87 to 91, 97 to 98, and 241 to 243; these read RAYT, DMVLH, AS, and TEG. The disordered stretch occupies residues 245 to 311; it reads AMGSSRGETS…GAAQPRTPVR (67 aa). The segment covering 253-309 has biased composition (low complexity); sequence TSTPAKPAAKTAPAKAAAKPAAASGAGTPEHAAAPAAATTGAPQAAPAPGAAQPRTP. A helical transmembrane segment spans residues 330-350; the sequence is LIVSGVLQALITLIELAPFVL. Positions 331–613 constitute an ABC transmembrane type-1 domain; sequence IVSGVLQALI…IGYGLSGIQT (283 aa). At 351-371 the chain is on the periplasmic side; that stretch reads LVELARLLLGGAEAERLWTLG. Residues 372 to 392 traverse the membrane as a helical segment; the sequence is LTAVSLIGLGAVLAAAMTLWL. At 393–444 the chain is on the cytoplasmic side; that stretch reads HRVDARFAHELRGRLLTKLSRLPLGWFTRRGSASTKQLVQDDTLALHYLITH. A helical transmembrane segment spans residues 445–465; sequence AIPDAVAAVVAPVAVLVYLFV. At 466 to 469 the chain is on the periplasmic side; sequence ADWR. The chain crosses the membrane as a helical span at residues 470–490; the sequence is VALVLFIPVLVYLVLMSVMTI. Topologically, residues 491-557 are cytoplasmic; sequence QSGSKIAQAP…PFVGKKTLMD (67 aa). Residues 558–578 form a helical membrane-spanning segment; sequence LVTRPATFLWIILVAGVPLVV. Over 579–586 the chain is Periplasmic; that stretch reads TGRMDPVN. A helical transmembrane segment spans residues 587-607; that stretch reads LLPFLLLGTTFGARLLGIGYG. Residues 608–908 are Cytoplasmic-facing; it reads LSGIQTGMLA…VSADAVEVGR (301 aa). An ABC transporter domain is found at 654–887; sequence VELDRVSFEY…GGRYRGLWDS (234 aa). Position 687–694 (687–694) interacts with ATP; it reads GPSGSGKS.

Belongs to the ABC transporter superfamily. Siderophore-Fe(3+) uptake transporter (SIUT) (TC 3.A.1.21) family. As to quaternary structure, forms a heterodimer with IrtB. The cofactor is FAD.

It is found in the cell inner membrane. Its activity is regulated as follows. The ATPase activity of IrtAB is stimulated more than 38-fold in the presence of Fe-MBT, and more than 10-fold in the presence of Fe-cMBT. Functionally, part of the ABC transporter complex IrtAB involved in the import of iron-bound mycobactin (Fe-MBT) and carboxymycobactin (Fe-cMBT). Has a preference for Fe-MBT over Fe-cMBT. Mycobactins are then reduced by the siderophore interaction domain to facilitate iron release in the bacterial cell. Transmembrane domains (TMD) form a pore in the membrane and the ATP-binding domain (NBD) is responsible for energy generation. In Mycolicibacterium thermoresistibile (strain ATCC 19527 / DSM 44167 / CIP 105390 / JCM 6362 / NCTC 10409 / 316) (Mycobacterium thermoresistibile), this protein is Mycobactin import ATP-binding/permease protein IrtA.